The primary structure comprises 444 residues: Transcription activator AFTR-2 (444 aa).

The segment at residues 16 to 43 (CDFCTQSKLRCNKNKPSCRRCTLQQQPC) is a DNA-binding region (zn(2)-C6 fungal-type). The segment at 49 to 88 (RRTGRPPKHPRKANDCQEANGQHGDQDPVTSTPGGSYQQQ) is disordered. Basic residues predominate over residues 50-59 (RTGRPPKHPR). Residues 76–88 (PVTSTPGGSYQQQ) are compositionally biased toward polar residues.

The protein localises to the nucleus. Functionally, transcription factor that regulates the expression of the gene clusters that mediate the biosynthesis of the host-selective toxins (HSTs) AF-toxins responsible for Alternaria black spot of strawberry disease by the strawberry pathotype. On cellular level, AF-toxins affect plasma membrane of susceptible cells and cause a sudden increase in loss of K(+) after a few minutes of toxin treatment. The protein is Transcription activator AFTR-2 of Alternaria alternata (Alternaria rot fungus).